The primary structure comprises 964 residues: Integrator complex subunit 7 (964 aa).

Positions Gln-937–Asn-958 are enriched in low complexity. A disordered region spans residues Gln-937 to Gln-964.

It belongs to the Integrator subunit 7 family. Component of the Integrator complex, composed of core subunits INTS1, INTS2, INTS3, INTS4, INTS5, INTS6, INTS7, INTS8, INTS9/RC74, INTS10, INTS11/CPSF3L, INTS12, INTS13, INTS14 and INTS15. The core complex associates with protein phosphatase 2A subunits PPP2CA and PPP2R1A, to form the Integrator-PP2A (INTAC) complex.

The protein localises to the nucleus. The protein resides in the chromosome. It localises to the cytoplasm. In terms of biological role, component of the integrator complex, a multiprotein complex that terminates RNA polymerase II (Pol II) transcription in the promoter-proximal region of genes. The integrator complex provides a quality checkpoint during transcription elongation by driving premature transcription termination of transcripts that are unfavorably configured for transcriptional elongation: the complex terminates transcription by (1) catalyzing dephosphorylation of the C-terminal domain (CTD) of Pol II subunit POLR2A/RPB1 and SUPT5H/SPT5, (2) degrading the exiting nascent RNA transcript via endonuclease activity and (3) promoting the release of Pol II from bound DNA. The integrator complex is also involved in terminating the synthesis of non-coding Pol II transcripts, such as enhancer RNAs (eRNAs), small nuclear RNAs (snRNAs), telomerase RNAs and long non-coding RNAs (lncRNAs). Essential during embryogenesis for eye development. The polypeptide is Integrator complex subunit 7 (ints7) (Danio rerio (Zebrafish)).